We begin with the raw amino-acid sequence, 161 residues long: Cytochrome c-type biogenesis protein CcmE (161 aa).

The Cytoplasmic portion of the chain corresponds to 1–8 (MNPRRKKR). The chain crosses the membrane as a helical; Signal-anchor for type II membrane protein span at residues 9–29 (LTLAIALIGGVAAIASLLLYA). Topologically, residues 30 to 161 (LNSNLNLFYT…DYSQQKSAAQ (132 aa)) are periplasmic. Residues histidine 131 and tyrosine 135 each coordinate heme. Positions 138 to 161 (PEVAEAMGQKHEKLDYSQQKSAAQ) are disordered.

It belongs to the CcmE/CycJ family.

Its subcellular location is the cell inner membrane. Heme chaperone required for the biogenesis of c-type cytochromes. Transiently binds heme delivered by CcmC and transfers the heme to apo-cytochromes in a process facilitated by CcmF and CcmH. This chain is Cytochrome c-type biogenesis protein CcmE, found in Shewanella sp. (strain MR-4).